The sequence spans 779 residues: METALTKTPEKRQVIFLAILLLLWEASSEAISYSMPEETESGYLVANLAQDLGLRVGELTTRGARIHHNGNKELLQLDAERGNLLLKEKPDREALCGATEPCVLHFQIILENPVQFFQTDLQFTDINDHFPEFPDTEMLLKIQEIAQPGTVFPLKAAQDPDIGSNAVQNYTVSPNLHFHVVTLSRSDDRKYPELVLDRALDREEQPELTLILTALDGGAPPKSGTTTVRIEVVDINDNAPQFLQSLYAVEVPENSPLNALVVTVSARDLDAGIHGNVAYSLFQGGGGPQPFVIDEITGEIRLKGALDFEATSYYTMEIVATDSGGLSGKCTVAIQVLDVNDNAPKLTISSLTSSIPENAPEAVVAVFSVSDPDSGDNGRMVCSIQNGLPFLLKPTFKNFYTLVTERPLDRESNAEYNITITVSDLGTPRLTTQHTITVQVSDINDNAPAFTQTSYTLFVHENNSPALHIGTISATDSDSGSNGLIIYSLLPPHDQQLGLASLISINSDNGQLFALRALDYEALQAFEFHVGATDRGSPALSSEALVRVVVLDDNDNAPFVLYPLQNASAPCTELLPRAAEPGYLITKVVAVDRDSGQNAWLSFQLLKATEPGLFSVWAHNGEVRTTRLLSERDAPKHRLLLLVKDNGEPLRSASVMLQVLVVDGFSQPYLPLPEVALNPTQEEDMLTLYLVIALASVSSLFLLSVLLFVGVKLCKKAREASLADCSIPEGHFPSHLVDVSGAGTLSQSYHYEVCLTEDSGTSDFKFMNPIIPSSLLQDS.

Positions 1 to 28 (METALTKTPEKRQVIFLAILLLLWEASS) are cleaved as a signal peptide. Residues 29 to 690 (EAISYSMPEE…QEEDMLTLYL (662 aa)) are Extracellular-facing. Cadherin domains follow at residues 75–133 (LQLD…FPEF), 134–242 (PDTE…APQF), 243–346 (LQSL…APKL), 347–450 (TISS…APAF), and 451–560 (TQTS…APFV). Cys-96 and Cys-102 are disulfide-bonded. An N-linked (GlcNAc...) asparagine glycan is attached at Asn-169. O-linked (Man) serine glycosylation occurs at Ser-223. 2 O-linked (Man) threonine glycosylation sites follow: Thr-225 and Thr-227. Asn-417 is a glycosylation site (N-linked (GlcNAc...) asparagine). N-linked (GlcNAc...) asparagine glycosylation is present at Asn-566. A Cadherin 6 domain is found at 575-675 (LPRAAEPGYL…SQPYLPLPEV (101 aa)). The chain crosses the membrane as a helical span at residues 691-711 (VIALASVSSLFLLSVLLFVGV). Topologically, residues 712–779 (KLCKKAREAS…IIPSSLLQDS (68 aa)) are cytoplasmic.

In terms of assembly, forms homodimers in trans (molecules expressed by two different cells). Forms promiscuous heterodimers in cis (at the plasma membrane of the same cell) with other protocadherins.

The protein resides in the cell membrane. Functionally, calcium-dependent cell-adhesion protein involved in cells self-recognition and non-self discrimination. Thereby, it is involved in the establishment and maintenance of specific neuronal connections in the brain. The protein is Protocadherin beta-8 of Mus musculus (Mouse).